A 192-amino-acid polypeptide reads, in one-letter code: Large ribosomal subunit protein uL6 (192 aa).

Belongs to the universal ribosomal protein uL6 family. Part of the 50S ribosomal subunit.

Its function is as follows. This protein binds to the 23S rRNA, and is important in its secondary structure. It is located near the subunit interface in the base of the L7/L12 stalk, and near the tRNA binding site of the peptidyltransferase center. The protein is Large ribosomal subunit protein uL6 of Nanoarchaeum equitans (strain Kin4-M).